The chain runs to 286 residues: uncharacterized protein (286 aa).

This sequence belongs to the NmrA-type oxidoreductase family.

This is an uncharacterized protein from Bacillus subtilis (strain 168).